A 168-amino-acid polypeptide reads, in one-letter code: UPF0262 protein BBta_0898 (168 aa).

Belongs to the UPF0262 family.

The polypeptide is UPF0262 protein BBta_0898 (Bradyrhizobium sp. (strain BTAi1 / ATCC BAA-1182)).